The chain runs to 443 residues: Omega-6 fatty acid desaturase, chloroplastic (443 aa).

A chloroplast-targeting transit peptide spans 1–64 (MASRIADSLF…AKKRIGCIKA (64 aa)). The Histidine box-1 motif lies at 166-170 (HDCAH). A Histidine box-2 motif is present at residues 202-206 (HDRHH). The Histidine box-3 signature appears at 362-366 (HIPHH).

It belongs to the fatty acid desaturase type 1 family.

Its subcellular location is the plastid. It localises to the chloroplast membrane. The catalysed reaction is a (9Z)-octadecenoyl-containing glycerolipid + 2 reduced [2Fe-2S]-[ferredoxin] + O2 + 2 H(+) = a (9Z,12Z)-octadecadienoyl-containing glycerolipid + 2 oxidized [2Fe-2S]-[ferredoxin] + 2 H2O. It functions in the pathway lipid metabolism; polyunsaturated fatty acid biosynthesis. Its function is as follows. Chloroplast omega-6 fatty acid desaturase introduces the second double bond in the biosynthesis of 16:3 and 18:3 fatty acids, important constituents of plant membranes. It is thought to use ferredoxin as an electron donor and to act on fatty acids esterified to galactolipids, sulfolipids and phosphatidylglycerol. This Brassica napus (Rape) protein is Omega-6 fatty acid desaturase, chloroplastic.